A 607-amino-acid chain; its full sequence is Elongation factor 4 (607 aa).

A tr-type G domain is found at 11–193 (KNIRNFSIIA…KIVEVVPPPE (183 aa)). GTP contacts are provided by residues 23–28 (DHGKST) and 140–143 (NKID).

It belongs to the TRAFAC class translation factor GTPase superfamily. Classic translation factor GTPase family. LepA subfamily.

It localises to the cell membrane. The catalysed reaction is GTP + H2O = GDP + phosphate + H(+). In terms of biological role, required for accurate and efficient protein synthesis under certain stress conditions. May act as a fidelity factor of the translation reaction, by catalyzing a one-codon backward translocation of tRNAs on improperly translocated ribosomes. Back-translocation proceeds from a post-translocation (POST) complex to a pre-translocation (PRE) complex, thus giving elongation factor G a second chance to translocate the tRNAs correctly. Binds to ribosomes in a GTP-dependent manner. In Staphylococcus saprophyticus subsp. saprophyticus (strain ATCC 15305 / DSM 20229 / NCIMB 8711 / NCTC 7292 / S-41), this protein is Elongation factor 4.